The primary structure comprises 85 residues: HssA/B-like protein 59 (85 aa).

The protein belongs to the hssA/B family.

The chain is HssA/B-like protein 59 (hssl59) from Dictyostelium discoideum (Social amoeba).